Consider the following 282-residue polypeptide: Acetyl-coenzyme A carboxylase carboxyl transferase subunit beta 1 (282 aa).

Residues 23-282 form the CoA carboxyltransferase N-terminal domain; the sequence is LMTKCPECRH…MHTKGGVQHV (260 aa). 4 residues coordinate Zn(2+): cysteine 27, cysteine 30, cysteine 46, and cysteine 49. The C4-type zinc-finger motif lies at 27–49; the sequence is CPECRHILLTKELEKNHKVCTKC.

The protein belongs to the AccD/PCCB family. Acetyl-CoA carboxylase is a heterohexamer composed of biotin carboxyl carrier protein (AccB), biotin carboxylase (AccC) and two subunits each of ACCase subunit alpha (AccA) and ACCase subunit beta (AccD). Requires Zn(2+) as cofactor.

The protein localises to the cytoplasm. It catalyses the reaction N(6)-carboxybiotinyl-L-lysyl-[protein] + acetyl-CoA = N(6)-biotinyl-L-lysyl-[protein] + malonyl-CoA. It functions in the pathway lipid metabolism; malonyl-CoA biosynthesis; malonyl-CoA from acetyl-CoA: step 1/1. In terms of biological role, component of the acetyl coenzyme A carboxylase (ACC) complex. Biotin carboxylase (BC) catalyzes the carboxylation of biotin on its carrier protein (BCCP) and then the CO(2) group is transferred by the transcarboxylase to acetyl-CoA to form malonyl-CoA. The protein is Acetyl-coenzyme A carboxylase carboxyl transferase subunit beta 1 of Lysinibacillus sphaericus (strain C3-41).